Here is a 210-residue protein sequence, read N- to C-terminus: Outer-membrane lipoprotein LolB (210 aa).

Residues 1–18 (MKKFTKILSLSTLLFLAG) form the signal peptide. Residue cysteine 19 is the site of N-palmitoyl cysteine attachment. Cysteine 19 carries the S-diacylglycerol cysteine lipid modification.

This sequence belongs to the LolB family. As to quaternary structure, monomer.

It localises to the cell outer membrane. In terms of biological role, plays a critical role in the incorporation of lipoproteins in the outer membrane after they are released by the LolA protein. The chain is Outer-membrane lipoprotein LolB from Actinobacillus pleuropneumoniae serotype 7 (strain AP76).